The primary structure comprises 400 residues: Hyaluronidase (400 aa).

Residues 1 to 19 (MQTILVLTTFLSAWFLAVG) form the signal peptide. 5 cysteine pairs are disulfide-bonded: Cys31-Cys319, Cys196-Cys209, Cys344-Cys355, Cys349-Cys384, and Cys386-Cys395. The active-site Proton donor is the Glu120. Residues Asn129 and Asn166 are each glycosylated (N-linked (GlcNAc...) asparagine). N-linked (GlcNAc...) asparagine glycosylation is found at Asn243 and Asn275. The EGF-like domain occupies 340–396 (NVARCSKQACSGRGRCTWPKDTSVIAWKFLVEKEDYDFYLGDIECKCVEGYEGRYCE).

Belongs to the glycosyl hydrolase 56 family. Monomer. In terms of tissue distribution, expressed by the venom gland.

The protein localises to the secreted. It carries out the reaction Random hydrolysis of (1-&gt;4)-linkages between N-acetyl-beta-D-glucosamine and D-glucuronate residues in hyaluronate.. In terms of biological role, spider venom endo-hyaluronidase that is able to degrade purified hyaluronic acid (HA) and chondroitin sulfate (CS). Has no activity on dermatan sulfate (DS) and heparan sulfate (HS). Also increases the dermonecrotic effect of the dermonecrotic toxin (AC P0CE80), when injected in rabbit skin, supporting the hypothesis that venom hyaluronidases are spreading factors. In Loxosceles intermedia (Brown spider), this protein is Hyaluronidase.